The chain runs to 301 residues: GTPase Era (301 aa).

One can recognise an Era-type G domain in the interval 6–173 (KSGFVAIVGR…LEQTNANLEI (168 aa)). The interval 14–21 (GRPNVGKS) is G1. 14–21 (GRPNVGKS) serves as a coordination point for GTP. The segment at 40 to 44 (QTTRN) is G2. The interval 61–64 (DTPG) is G3. GTP is bound by residues 61-65 (DTPGI) and 123-126 (NKID). The segment at 123–126 (NKID) is G4. Positions 152–154 (ISA) are G5. The region spanning 204–282 (TREEVPHSVA…FLEVWVKVQK (79 aa)) is the KH type-2 domain.

Belongs to the TRAFAC class TrmE-Era-EngA-EngB-Septin-like GTPase superfamily. Era GTPase family. In terms of assembly, monomer.

It localises to the cytoplasm. It is found in the cell membrane. Functionally, an essential GTPase that binds both GDP and GTP, with rapid nucleotide exchange. Plays a role in 16S rRNA processing and 30S ribosomal subunit biogenesis and possibly also in cell cycle regulation and energy metabolism. This Listeria monocytogenes serotype 4a (strain HCC23) protein is GTPase Era.